The sequence spans 378 residues: Erythronate-4-phosphate dehydrogenase (378 aa).

Substrate contacts are provided by Ser-45 and Thr-66. NAD(+)-binding residues include Asp-146 and Thr-175. The active site involves Arg-208. Asp-232 serves as a coordination point for NAD(+). Residue Glu-237 is part of the active site. The active-site Proton donor is His-254. NAD(+) is bound at residue Gly-257. Tyr-258 contacts substrate.

Belongs to the D-isomer specific 2-hydroxyacid dehydrogenase family. PdxB subfamily. In terms of assembly, homodimer.

Its subcellular location is the cytoplasm. It catalyses the reaction 4-phospho-D-erythronate + NAD(+) = (R)-3-hydroxy-2-oxo-4-phosphooxybutanoate + NADH + H(+). The protein operates within cofactor biosynthesis; pyridoxine 5'-phosphate biosynthesis; pyridoxine 5'-phosphate from D-erythrose 4-phosphate: step 2/5. Its function is as follows. Catalyzes the oxidation of erythronate-4-phosphate to 3-hydroxy-2-oxo-4-phosphonooxybutanoate. In Escherichia coli O6:H1 (strain CFT073 / ATCC 700928 / UPEC), this protein is Erythronate-4-phosphate dehydrogenase.